A 562-amino-acid polypeptide reads, in one-letter code: Zinc finger protein 579 (562 aa).

The span at 1–11 shows a compositional bias: pro residues; that stretch reads MDPQPPPPAQG. The interval 1–43 is disordered; the sequence is MDPQPPPPAQGSPPHRGRGRGRGRGRGRGRGRGRGGAGAPRAP. Over residues 15 to 33 the composition is skewed to basic residues; the sequence is HRGRGRGRGRGRGRGRGRG. 3 consecutive C2H2-type zinc fingers follow at residues 44–66, 72–94, and 100–123; these read LPCPTCGRLFRFPYYLSRHRLSH, HACPLCPKAFRRPAHLSRHLRGH, and LRCAACPRTFPEPAQLRRHLAQEH. Omega-N-methylarginine is present on Arg-92. Residues 139–203 form a disordered region; it reads TAEPSWGPQD…SESEEAEAGA (65 aa). A phosphoserine mark is found at Ser-194 and Ser-196. 2 consecutive C2H2-type zinc fingers follow at residues 270–292 and 298–320; these read HQCSICLKAFARPWSLSRHRLVH and FVCPDCGLAFRLASYLRQHRRVH. The segment at 327–379 is disordered; sequence APLPAAGKKDDKASGARNSAKGPEGGEGAECGGASEGGEGQNGGDAAPARPPA. The span at 349-369 shows a compositional bias: gly residues; it reads PEGGEGAECGGASEGGEGQNG. C2H2-type zinc fingers lie at residues 384 to 406, 412 to 434, and 441 to 463; these read FWCPECGKGFRRRAHLRQHGVTH, FQCVRCQREFKRLADLARHAQVH, and HPCPRCPRRFSRAYSLLRHQRCH. The disordered stretch occupies residues 477-562; that stretch reads QAQAPTSPPP…HLRGLGGLAS (86 aa). Pro residues-rich tracts occupy residues 482 to 491 and 512 to 525; these read TSPPPPPPPL and PSPGTPPQSPPAPP. At Ser-483 the chain carries Phosphoserine.

The protein belongs to the krueppel C2H2-type zinc-finger protein family.

It is found in the nucleus. May be involved in transcriptional regulation. The polypeptide is Zinc finger protein 579 (ZNF579) (Homo sapiens (Human)).